A 479-amino-acid polypeptide reads, in one-letter code: Chromosomal replication initiator protein DnaA (479 aa).

The interval 1 to 74 is domain I, interacts with DnaA modulators; sequence MFSGVVMAWQ…RSLTGVDSSI (74 aa). The tract at residues 74–142 is domain II; the sequence is ITDVRFLEKK…SVPKNNASIR (69 aa). The segment at 143–360 is domain III, AAA+ region; the sequence is ALHPRYTFDE…SAITAIGARA (218 aa). The ATP site is built by G187, G189, K190, and S191. Residues 361–479 form a domain IV, binds dsDNA region; sequence RLMGGYIDMN…NLLSDKVKQI (119 aa).

It belongs to the DnaA family. Oligomerizes as a right-handed, spiral filament on DNA at oriC.

Its subcellular location is the cytoplasm. Functionally, plays an essential role in the initiation and regulation of chromosomal replication. ATP-DnaA binds to the origin of replication (oriC) to initiate formation of the DNA replication initiation complex once per cell cycle. Binds the DnaA box (a 9 base pair repeat at the origin) and separates the double-stranded (ds)DNA. Forms a right-handed helical filament on oriC DNA; dsDNA binds to the exterior of the filament while single-stranded (ss)DNA is stabiized in the filament's interior. The ATP-DnaA-oriC complex binds and stabilizes one strand of the AT-rich DNA unwinding element (DUE), permitting loading of DNA polymerase. After initiation quickly degrades to an ADP-DnaA complex that is not apt for DNA replication. Binds acidic phospholipids. This Desulfotalea psychrophila (strain LSv54 / DSM 12343) protein is Chromosomal replication initiator protein DnaA.